A 155-amino-acid polypeptide reads, in one-letter code: Large-conductance mechanosensitive channel (155 aa).

3 helical membrane-spanning segments follow: residues 16–36, 40–60, and 88–108; these read VVDM…VNNL, VILP…LYII, and GVFL…FLLV.

This sequence belongs to the MscL family. In terms of assembly, homopentamer.

It is found in the cell inner membrane. In terms of biological role, channel that opens in response to stretch forces in the membrane lipid bilayer. May participate in the regulation of osmotic pressure changes within the cell. The chain is Large-conductance mechanosensitive channel from Chlorobium chlorochromatii (strain CaD3).